The primary structure comprises 189 residues: Elongation factor P (189 aa).

This sequence belongs to the elongation factor P family.

It is found in the cytoplasm. It participates in protein biosynthesis; polypeptide chain elongation. Its function is as follows. Involved in peptide bond synthesis. Stimulates efficient translation and peptide-bond synthesis on native or reconstituted 70S ribosomes in vitro. Probably functions indirectly by altering the affinity of the ribosome for aminoacyl-tRNA, thus increasing their reactivity as acceptors for peptidyl transferase. The polypeptide is Elongation factor P (Chloroflexus aggregans (strain MD-66 / DSM 9485)).